The chain runs to 459 residues: Zinc finger transcription factor lin-29 (459 aa).

Polar residues predominate over residues 1-14; that stretch reads MDQTVLDSAFNSPV. The tract at residues 1–73 is disordered; that stretch reads MDQTVLDSAF…GSTGSTPAHH (73 aa). Low complexity predominate over residues 16-56; it reads SGIAGTTTGSGSTTHFGVGTNFKVSVRSSSRSTDGTDSTDG. Over residues 57 to 73 the composition is skewed to polar residues; sequence ANSDNVTGSTGSTPAHH. C2H2-type zinc fingers lie at residues 151-173, 180-202, 208-232, 238-260, and 269-291; these read YKCT…MRIH, GPCN…IRTH, YKCK…SRCH, FKCN…IPKH, and HICP…MTKH. The segment at 390-406 is interacts with mab-10; that stretch reads PGFNMITPLENIQRYNG. The span at 423–444 shows a compositional bias: low complexity; that stretch reads VSSTPSSTSSSSAGSSSSQGGV. Residues 423–459 are disordered; it reads VSSTPSSTSSSSAGSSSSQGGVFNPQSLINNMKNHSY. A compositionally biased stretch (polar residues) spans 446 to 459; sequence NPQSLINNMKNHSY.

In terms of assembly, interacts (via C-terminus) with transcription cofactor mab-10. As to expression, expressed in lateral hypodermal seam cells (at protein level).

It is found in the nucleus. Transcription factor which regulates the expression of various genes, including those involved in cuticle synthesis and maintenance, such as collagens, and in lipid metabolism. Binds to promoter regions of genes, at 5'-[(T/G)TTTTTT(A/T/C/G)]-3' consensus sequences. Heterochronic protein which controls the choice of stage specific cell fates, including at the juvenile to adult transition. Promotes differentiation, together with transcriptional cofactor mab-10, perhaps as part of a transcriptional complex. Required for vulval morphogenesis and egg laying; perhaps by acting in a subset of the lateral seam cells. Involved in the exit of seam cells from the cell cycle. Required for specification of uterine pi-cell fate, acting upstream of lin-12 Notch signaling, perhaps via maintenance of lag-2 expression in the anchor cell (AC). Involved in morphogenesis of the specialized male tail used in mating. Acts cell non-autonomously from the hypodermis to regulate expression of genes in the intestine, including genes involved in lipid metabolism. May regulate vitellogenesis via the mTORC2 signaling mediated pathway, independently of daf-16. May promote nuclear accumulation of mab-10 in seam cells post-transcriptionally. Dispensable for seam cell fusion. Its function is as follows. Required for seam cell fusion. The chain is Zinc finger transcription factor lin-29 from Caenorhabditis elegans.